The primary structure comprises 30 residues: uncharacterized protein (30 aa).

The helical transmembrane segment at 9–26 (YRLVIIVLISVYYRYRFF) threads the bilayer.

It localises to the plastid. Its subcellular location is the chloroplast membrane. This is an uncharacterized protein from Marchantia polymorpha (Common liverwort).